We begin with the raw amino-acid sequence, 230 residues long: Ubiquitin carboxyl-terminal hydrolase isozyme L3 (230 aa).

The region spanning 5–229 is the UCH catalytic domain; that stretch reads RWLPLEANPE…LRFNAIALSA (225 aa). The segment at 8 to 13 is interaction with ubiquitin; it reads PLEANP. The active-site Nucleophile is cysteine 95. Serine 130 bears the Phosphoserine mark. Residues 152 to 159 form an interaction with ubiquitin. Crossover loop which restricts access of large ubiquitin adducts to the active site region; sequence AHEGQTEA. Histidine 169 serves as the catalytic Proton donor. The segment at 219–224 is interaction with ubiquitin; that stretch reads ELRFNA.

Belongs to the peptidase C12 family. As to quaternary structure, preferentially binds diubiquitin; the interaction does not hydrolyze diubiquitin but, in vitro, inhibits the hydrolyzing activity on other substrates. Highly expressed in heart, skeletal muscle, and testis.

It is found in the cytoplasm. The catalysed reaction is Thiol-dependent hydrolysis of ester, thioester, amide, peptide and isopeptide bonds formed by the C-terminal Gly of ubiquitin (a 76-residue protein attached to proteins as an intracellular targeting signal).. With respect to regulation, inhibited by monoubiquitin and diubiquitin. Deubiquitinating enzyme (DUB) that controls levels of cellular ubiquitin through processing of ubiquitin precursors and ubiquitinated proteins. Thiol protease that recognizes and hydrolyzes a peptide bond at the C-terminal glycine of either ubiquitin or NEDD8. Has a 10-fold preference for Arg and Lys at position P3'', and exhibits a preference towards 'Lys-48'-linked ubiquitin chains. Deubiquitinates ENAC in apical compartments, thereby regulating apical membrane recycling. Indirectly increases the phosphorylation of IGFIR, AKT and FOXO1 and promotes insulin-signaling and insulin-induced adipogenesis. Required for stress-response retinal, skeletal muscle and germ cell maintenance. May be involved in working memory. Can hydrolyze UBB(+1), a mutated form of ubiquitin which is not effectively degraded by the proteasome and is associated with neurogenerative disorders. The sequence is that of Ubiquitin carboxyl-terminal hydrolase isozyme L3 (UCHL3) from Homo sapiens (Human).